A 356-amino-acid polypeptide reads, in one-letter code: Ferredoxin--NADP reductase (356 aa).

Threonine 25, glutamate 44, glutamine 52, tyrosine 57, valine 97, phenylalanine 132, aspartate 298, and serine 339 together coordinate FAD.

It belongs to the ferredoxin--NADP reductase type 2 family. As to quaternary structure, homodimer. The cofactor is FAD.

The enzyme catalyses 2 reduced [2Fe-2S]-[ferredoxin] + NADP(+) + H(+) = 2 oxidized [2Fe-2S]-[ferredoxin] + NADPH. This Chlorobaculum parvum (strain DSM 263 / NCIMB 8327) (Chlorobium vibrioforme subsp. thiosulfatophilum) protein is Ferredoxin--NADP reductase.